The sequence spans 456 residues: Sulfoacetaldehyde dehydrogenase (456 aa).

Position 213–218 (213–218 (GGTAAA)) interacts with NAD(+). Catalysis depends on residues glutamate 233 and cysteine 267.

The protein belongs to the aldehyde dehydrogenase family. As to quaternary structure, homotetramer.

It carries out the reaction sulfoacetaldehyde + NAD(+) + H2O = sulfoacetate + NADH + 2 H(+). Its function is as follows. Mediates conversion of 2-sulfoacetaldehyde into sulfoacetate. The enzyme is specific for NAD; NADP is not a substrate. Part of a pathway that can utilize the amino group of taurine as a sole source of nitrogen for growth. The sequence is that of Sulfoacetaldehyde dehydrogenase (safD) from Neptuniibacter caesariensis.